Reading from the N-terminus, the 763-residue chain is Elongation factor G, mitochondrial (763 aa).

The transit peptide at Met1–Ala52 directs the protein to the mitochondrion. In terms of domain architecture, tr-type G spans Ser60 to Ser347. Residues Ala69–Thr76, Asp145–His149, and Asn199–Asp202 each bind GTP.

This sequence belongs to the TRAFAC class translation factor GTPase superfamily. Classic translation factor GTPase family. EF-G/EF-2 subfamily.

It localises to the mitochondrion. It participates in protein biosynthesis; polypeptide chain elongation. Mitochondrial GTPase that catalyzes the GTP-dependent ribosomal translocation step during translation elongation. During this step, the ribosome changes from the pre-translocational (PRE) to the post-translocational (POST) state as the newly formed A-site-bound peptidyl-tRNA and P-site-bound deacylated tRNA move to the P and E sites, respectively. Catalyzes the coordinated movement of the two tRNA molecules, the mRNA and conformational changes in the ribosome. The protein is Elongation factor G, mitochondrial (mef1) of Schizosaccharomyces japonicus (strain yFS275 / FY16936) (Fission yeast).